The chain runs to 504 residues: Maturase K (504 aa).

The protein belongs to the intron maturase 2 family. MatK subfamily.

It localises to the plastid. The protein localises to the chloroplast. Its function is as follows. Usually encoded in the trnK tRNA gene intron. Probably assists in splicing its own and other chloroplast group II introns. The chain is Maturase K from Chimaphila umbellata (Pipsissewa).